Consider the following 133-residue polypeptide: Transcription antitermination protein NusB (133 aa).

This sequence belongs to the NusB family.

In terms of biological role, involved in transcription antitermination. Required for transcription of ribosomal RNA (rRNA) genes. Binds specifically to the boxA antiterminator sequence of the ribosomal RNA (rrn) operons. This Clostridium botulinum (strain Alaska E43 / Type E3) protein is Transcription antitermination protein NusB.